The primary structure comprises 49 residues: Defensin Tk-AMP-D1 (49 aa).

4 disulfides stabilise this stretch: C3-C49, C14-C34, C20-C43, and C24-C45.

Has weak antifungal activity against F.graminearum and F.verticillioides below 30 ug/ml, but not against A.consortiale B.cinerea, H.sativum, F.culmorum, C.graminicola and D.maydis. The protein is Defensin Tk-AMP-D1 of Triticum kiharae (Wheat).